The chain runs to 325 residues: Tagatose 1,6-diphosphate aldolase 1 (325 aa).

Belongs to the aldolase LacD family.

The enzyme catalyses D-tagatofuranose 1,6-bisphosphate = D-glyceraldehyde 3-phosphate + dihydroxyacetone phosphate. It participates in carbohydrate metabolism; D-tagatose 6-phosphate degradation; D-glyceraldehyde 3-phosphate and glycerone phosphate from D-tagatose 6-phosphate: step 2/2. The chain is Tagatose 1,6-diphosphate aldolase 1 (lacD1) from Streptococcus pyogenes serotype M3 (strain ATCC BAA-595 / MGAS315).